A 72-amino-acid chain; its full sequence is Lantibiotic lichenicidin VK21 A2 (72 aa).

Residues 1–21 (MKTMKNSAAREAFKGANHPAG) form a disordered region. Residues 1–40 (MKTMKNSAAREAFKGANHPAGMVSEEELKALVGGNDVNPE) constitute a propeptide that is removed on maturation. T41 bears the 2-oxobutanoic acid mark. T42, T45, and T46 each carry (Z)-2,3-didehydrobutyrine. The lanthionine (Ser-Cys) cross-link spans 47 to 51 (SSWTC). A 2,3-didehydroalanine (Ser) modification is found at S48. Residues T53 and T57 each carry the (Z)-2,3-didehydrobutyrine modification. The segment at residues 59–63 (SASLC) is a cross-link (lanthionine (Ser-Cys)). Cross-links (beta-methyllanthionine (Thr-Cys)) lie at residues 65 to 68 (TTKC) and 69 to 72 (TSRC). T66 bears the (Z)-2,3-didehydrobutyrine mark.

In terms of processing, maturation of lantibiotics involves the enzymatic conversion of Thr, and Ser into dehydrated AA and the formation of thioether bonds with cysteine. This is followed by membrane translocation and cleavage of the modified precursor. The 2,3-didehydrobutyrines are determined to be the Z-isomers.

It is found in the secreted. Functionally, lanthionine-containing peptide antibiotic (lantibiotic) active on Gram-positive bacteria. The bactericidal activity of lantibiotics is based on depolarization of energized bacterial cytoplasmic membranes, initiated by the formation of aqueous transmembrane pores. When present individually, LchA2 exhibits activity towards B.subtilis L1 (IC(50)=30 uM), Rhodococcus sp. SS2 (IC(50)=16.6 uM), M.luteus B1314 (IC(50)=2.6 uM), B.megaterium VKM41 (IC(50)=2 uM), S.aureus 209p (IC(50)=20 uM), B.pumilus 2001, B.globigii I, B.amyloliquefaciens I, M.smegmatis 1171 and M.phlei 1291. However, when combined with LchA1, it displays much stronger activity against B.subtilis L1 (IC(50)=0.64 uM), Rhodococcus sp. SS2 (IC(50)=0.64 uM), M.luteus B1314 (IC(50)=0.09 uM), B.megaterium VKM41 (IC(50)=0.12 uM) and S.aureus 209p (IC(50)=0.64 uM). The activity of the combined LchA1 and LchA2 peptides is strongest at a molar ratio of 1. Even when applied at 17-fold concentration of the highest IC(50) values for Gram-positive bacteria, neither the individual nor the combined peptides display activity against Gram-negative bacteria P.aeruginosa PAO1, P.putida I-97 or E.coli C600. The polypeptide is Lantibiotic lichenicidin VK21 A2 (Bacillus licheniformis).